Reading from the N-terminus, the 38-residue chain is Phospholipase A2 2 (38 aa).

Ca(2+) contacts are provided by Y28, G30, and G32.

It belongs to the phospholipase A2 family. Group I subfamily. Ca(2+) serves as cofactor. Expressed by the venom gland.

The protein localises to the secreted. The catalysed reaction is a 1,2-diacyl-sn-glycero-3-phosphocholine + H2O = a 1-acyl-sn-glycero-3-phosphocholine + a fatty acid + H(+). Snake venom phospholipase A2 (PLA2) that inhibits neuromuscular transmission by blocking acetylcholine release from the nerve termini. PLA2 catalyzes the calcium-dependent hydrolysis of the 2-acyl groups in 3-sn-phosphoglycerides. The polypeptide is Phospholipase A2 2 (Calliophis bivirgatus (Blue Malaysian coral snake)).